The chain runs to 295 residues: Guided entry of tail-anchored proteins factor CAMLG (295 aa).

2 disordered regions span residues 1–73 (MEPM…ILNP) and 127–148 (GVEL…RGSH). The Cytoplasmic portion of the chain corresponds to 1–188 (MEPMPSATDG…RTTEEFDSFR (188 aa)). The span at 15 to 24 (ATPSGLSASQ) shows a compositional bias: polar residues. Serine 53 carries the phosphoserine modification. The segment covering 127-138 (GVELRQRNRGDL) has biased composition (basic and acidic residues). Residues 189 to 206 (IFRLVGCALLALVVRAFV) form a helical membrane-spanning segment. Topologically, residues 207–208 (CK) are lumenal. An intrachain disulfide couples cysteine 207 to cysteine 283. The chain crosses the membrane as a helical span at residues 209-227 (YLSIFAPFLTLQLAYMGLY). The Cytoplasmic portion of the chain corresponds to 228–268 (KYFPKGEKKVKTTVLTAALLLSGIPAEVINRSMDTYSKMGE). A helical transmembrane segment spans residues 269 to 287 (VFTDLCVYFFTFIFCHEVL). At 288–295 (EYWGPEVP) the chain is on the lumenal side.

Component of the Golgi to ER traffic (GET) complex, which is composed of GET1/WRB, CAMLG/GET2 and GET3/TRC40. Within the complex, GET1 and CAMLG form a heterotetramer which is stabilized by phosphatidylinositol binding and which binds to the GET3 homodimer. Interacts (via C-terminus) with GET1. Interacts (via N-terminus) with GET3. GET3 shows a higher affinity for CAMLG than for GET1. Interacts (via N-terminus) with TNFRSF13B/TACI (via C-terminus). In the central nervous system, expressed in astrocytes, microglia and neurons (at protein level).

The protein resides in the endoplasmic reticulum membrane. In terms of biological role, required for the post-translational delivery of tail-anchored (TA) proteins to the endoplasmic reticulum. Together with GET1/WRB, acts as a membrane receptor for soluble GET3/TRC40, which recognizes and selectively binds the transmembrane domain of TA proteins in the cytosol. Required for the stability of GET1. Stimulates calcium signaling in T cells through its involvement in elevation of intracellular calcium. Essential for the survival of peripheral follicular B cells. In Rattus norvegicus (Rat), this protein is Guided entry of tail-anchored proteins factor CAMLG.